The primary structure comprises 198 residues: Formate-dependent nitrite reductase complex subunit NrfG (198 aa).

TPR repeat units lie at residues 73 to 106 (SEQW…RGEN) and 144 to 177 (ITAL…NSPR).

Functionally, required for formate-dependent nitrite reduction. Not required for the biosynthesis of any of the c-type cytochromes nor for the secretion of the periplasmic cytochromes. In Escherichia coli O157:H7, this protein is Formate-dependent nitrite reductase complex subunit NrfG (nrfG).